The sequence spans 209 residues: Protein bli-3 (209 aa).

Residues 1–11 (MSGQGFSNADT) show a composition bias toward polar residues. The disordered stretch occupies residues 1-24 (MSGQGFSNADTGNKPADPYKQANL).

The polypeptide is Protein bli-3 (bli-3) (Neurospora crassa (strain ATCC 24698 / 74-OR23-1A / CBS 708.71 / DSM 1257 / FGSC 987)).